We begin with the raw amino-acid sequence, 95 residues long: Small ubiquitin-related modifier 4 (95 aa).

Residues 17 to 95 enclose the Ubiquitin-like domain; sequence HINLKVAGQD…VLQQQTGGVY (79 aa). A Glycyl lysine isopeptide (Gly-Lys) (interchain with K-? in acceptor proteins) cross-link involves residue Gly93. The propeptide occupies 94–95; the sequence is VY.

Belongs to the ubiquitin family. SUMO subfamily. In terms of assembly, interacts with SAE2. Covalently attached to a number of proteins.

Its function is as follows. Ubiquitin-like protein which can be covalently attached to target lysines as a monomer. Does not seem to be involved in protein degradation and may modulate protein subcellular localization, stability or activity. Upon oxidative stress, conjugates to various anti-oxidant enzymes, chaperones, and stress defense proteins. May also conjugate to NFKBIA, TFAP2A and FOS, negatively regulating their transcriptional activity, and to NR3C1, positively regulating its transcriptional activity. Covalent attachment to its substrates requires prior activation by the E1 complex SAE1-SAE2 and linkage to the E2 enzyme UBE2I. In Sus scrofa (Pig), this protein is Small ubiquitin-related modifier 4 (SUMO4).